A 199-amino-acid polypeptide reads, in one-letter code: Thymidylate kinase (199 aa).

7-14 (GTEGVGKT) contacts ATP.

Belongs to the thymidylate kinase family.

The enzyme catalyses dTMP + ATP = dTDP + ADP. Phosphorylation of dTMP to form dTDP in both de novo and salvage pathways of dTTP synthesis. The chain is Thymidylate kinase from Acinetobacter baumannii (strain ATCC 17978 / DSM 105126 / CIP 53.77 / LMG 1025 / NCDC KC755 / 5377).